Consider the following 440-residue polypeptide: 2-methylisoborneol synthase (440 aa).

The segment at 1–116 (MPDSGPLGPH…SPAPAEPAAG (116 aa)) is disordered. Residues 17–27 (TPATTVPDAPA) show a composition bias toward low complexity. Residues 48-58 (PPVPIPSPSPP) show a composition bias toward pro residues. Residues 59–75 (SGSASAAADTPDATTVG) show a composition bias toward low complexity. Residues 102–111 (PSLPGSPAPA) are compositionally biased toward pro residues. 6 residues coordinate Mg(2+): aspartate 197, aspartate 198, glutamate 202, asparagine 345, serine 349, and glutamate 353.

The protein belongs to the terpene synthase family. 2-methylisoborneol synthase subfamily. Mg(2+) serves as cofactor.

It catalyses the reaction (E)-2-methylgeranyl diphosphate + H2O = 2-methylisoborneol + diphosphate. Catalyzes the cyclization of 2-methylgeranyl diphosphate (2-MeGPP) to 2-methylisoborneol (2-MIB), which likely involves the intermediacy of 2-methyllinalyl diphosphate. The polypeptide is 2-methylisoborneol synthase (Streptomyces ambofaciens (strain ATCC 23877 / 3486 / DSM 40053 / JCM 4204 / NBRC 12836 / NRRL B-2516)).